The following is a 61-amino-acid chain: Small ribosomal subunit protein uS14B (61 aa).

Positions 24, 27, 40, and 43 each coordinate Zn(2+).

This sequence belongs to the universal ribosomal protein uS14 family. Zinc-binding uS14 subfamily. In terms of assembly, part of the 30S ribosomal subunit. Contacts proteins S3 and S10. The cofactor is Zn(2+).

Binds 16S rRNA, required for the assembly of 30S particles and may also be responsible for determining the conformation of the 16S rRNA at the A site. The protein is Small ribosomal subunit protein uS14B of Mycolicibacterium smegmatis (strain ATCC 700084 / mc(2)155) (Mycobacterium smegmatis).